The primary structure comprises 170 residues: Lipoprotein signal peptidase (170 aa).

Transmembrane regions (helical) follow at residues 5–25 (IVGV…KAYA), 62–82 (SNLI…VLFV), and 89–111 (STIC…LRFG). Active-site residues include Asp-115 and Asp-133. Residues 126 to 146 (WPAFNFADVCVTCGVICFLCL) traverse the membrane as a helical segment.

It belongs to the peptidase A8 family.

The protein localises to the cell inner membrane. The catalysed reaction is Release of signal peptides from bacterial membrane prolipoproteins. Hydrolyzes -Xaa-Yaa-Zaa-|-(S,diacylglyceryl)Cys-, in which Xaa is hydrophobic (preferably Leu), and Yaa (Ala or Ser) and Zaa (Gly or Ala) have small, neutral side chains.. The protein operates within protein modification; lipoprotein biosynthesis (signal peptide cleavage). In terms of biological role, this protein specifically catalyzes the removal of signal peptides from prolipoproteins. The chain is Lipoprotein signal peptidase from Anaplasma marginale (strain Florida).